Reading from the N-terminus, the 173-residue chain is Co-chaperone protein HscB (173 aa).

The 73-residue stretch at 2 to 74 (DYFTLLGMPN…LSRAEYMLSL (73 aa)) folds into the J domain.

The protein belongs to the HscB family. In terms of assembly, interacts with HscA and stimulates its ATPase activity. Interacts with IscU.

Co-chaperone involved in the maturation of iron-sulfur cluster-containing proteins. Seems to help targeting proteins to be folded toward HscA. The sequence is that of Co-chaperone protein HscB from Proteus mirabilis (strain HI4320).